The following is a 419-amino-acid chain: Effector protein BipC (419 aa).

Disordered stretches follow at residues 62–94 (VAGSGAQRVELARPKPDAQTRATDRRTVSGLER) and 338–402 (LQSG…AKSQ). 2 stretches are compositionally biased toward basic and acidic residues: residues 71–94 (ELARPKPDAQTRATDRRTVSGLER) and 380–392 (TRDEAAHRSREAA).

The protein belongs to the SctB/SipC family.

It localises to the secreted. The protein is Effector protein BipC (bipC) of Burkholderia pseudomallei (strain 1710b).